We begin with the raw amino-acid sequence, 89 residues long: uncharacterized protein (89 aa).

This is an uncharacterized protein from Treponema pallidum (strain Nichols).